A 599-amino-acid polypeptide reads, in one-letter code: NADH-quinone oxidoreductase subunit C/D (599 aa).

Residues 1–190 are NADH dehydrogenase I subunit C; sequence MMIDQIAQES…DPFELTRQKE (190 aa). Positions 214–599 are NADH dehydrogenase I subunit D; it reads DFMFLNLGPN…IDFVMSDVDR (386 aa).

It in the N-terminal section; belongs to the complex I 30 kDa subunit family. This sequence in the C-terminal section; belongs to the complex I 49 kDa subunit family. As to quaternary structure, NDH-1 is composed of 13 different subunits. Subunits NuoB, CD, E, F, and G constitute the peripheral sector of the complex.

It localises to the cell inner membrane. The enzyme catalyses a quinone + NADH + 5 H(+)(in) = a quinol + NAD(+) + 4 H(+)(out). Its function is as follows. NDH-1 shuttles electrons from NADH, via FMN and iron-sulfur (Fe-S) centers, to quinones in the respiratory chain. The immediate electron acceptor for the enzyme in this species is believed to be ubiquinone. Couples the redox reaction to proton translocation (for every two electrons transferred, four hydrogen ions are translocated across the cytoplasmic membrane), and thus conserves the redox energy in a proton gradient. The chain is NADH-quinone oxidoreductase subunit C/D from Photorhabdus laumondii subsp. laumondii (strain DSM 15139 / CIP 105565 / TT01) (Photorhabdus luminescens subsp. laumondii).